Here is a 383-residue protein sequence, read N- to C-terminus: MGQIQLTDLTKRFGDTVAVDDLSLDIDDEEFLVLVGPSGCGKSTTLRMLAGLETPTSGDIYIGGDHMNYRVPQNRDIAMVFQDYALYPHMTVRQNIRFGLEEEEGYTSAERDERVVEVAETLGIADLLDRKPDELSGGQQQRVALGRAIVRDPEVFLMDEPLSNLDAKLRAEMRTELQNLQDQLAVTTVYVTHNQTEAMTMADRIAVMDDGELQQVASPFECYHEPNNLFVAEFIGEPMINLVRGTRSESTFVGEHFSYPLDEDVMESVDDRDDFVLGVRPEDIEVADAAPDDAALDDHDLQMDVTVVEPHGDQNVLHLSHPDQPSADDALQAVTEGMHLVTRGDRVTVTIPPDKIHLFDAETGTAVHNRRHDQEADFTQLEQ.

Positions 4 to 235 constitute an ABC transporter domain; that stretch reads IQLTDLTKRF…PNNLFVAEFI (232 aa). 36-43 serves as a coordination point for ATP; sequence GPSGCGKS.

The protein belongs to the ABC transporter superfamily. Carbohydrate uptake transporter-1 (CUT1) (TC 3.A.1.1) family. As to quaternary structure, the complex is composed of two ATP-binding proteins (XacJ and XacK), two transmembrane proteins (XacH and XacI) and a solute-binding protein (XacG).

The protein localises to the cell membrane. It carries out the reaction D-xylose(out) + ATP + H2O = D-xylose(in) + ADP + phosphate + H(+). The catalysed reaction is L-arabinose(out) + ATP + H2O = L-arabinose(in) + ADP + phosphate + H(+). Part of the ABC transporter complex XacGHIJK involved in the uptake of xylose and arabinose. Responsible for energy coupling to the transport system. This Haloferax volcanii (strain ATCC 29605 / DSM 3757 / JCM 8879 / NBRC 14742 / NCIMB 2012 / VKM B-1768 / DS2) (Halobacterium volcanii) protein is Xylose/arabinose import ATP-binding protein XacJ.